A 74-amino-acid polypeptide reads, in one-letter code: UPF0270 protein NT01EI_3666 (74 aa).

This sequence belongs to the UPF0270 family.

This is UPF0270 protein NT01EI_3666 from Edwardsiella ictaluri (strain 93-146).